The primary structure comprises 257 residues: Global transcriptional regulator CodY (257 aa).

A GAF domain region spans residues 1–155 (MSLLSKTREL…AATVLGMEIL (155 aa)). The H-T-H motif DNA-binding region spans 203 to 222 (ASKVADRVGITRSVIVNALR).

This sequence belongs to the CodY family.

Its subcellular location is the cytoplasm. DNA-binding global transcriptional regulator which is involved in the adaptive response to starvation and acts by directly or indirectly controlling the expression of numerous genes in response to nutrient availability. During rapid exponential growth, CodY is highly active and represses genes whose products allow adaptation to nutrient depletion. In Staphylococcus carnosus (strain TM300), this protein is Global transcriptional regulator CodY.